The primary structure comprises 464 residues: ATP synthase subunit beta (464 aa).

152–159 provides a ligand contact to ATP; the sequence is GGAGVGKS.

This sequence belongs to the ATPase alpha/beta chains family. F-type ATPases have 2 components, CF(1) - the catalytic core - and CF(0) - the membrane proton channel. CF(1) has five subunits: alpha(3), beta(3), gamma(1), delta(1), epsilon(1). CF(0) has three main subunits: a(1), b(2) and c(9-12). The alpha and beta chains form an alternating ring which encloses part of the gamma chain. CF(1) is attached to CF(0) by a central stalk formed by the gamma and epsilon chains, while a peripheral stalk is formed by the delta and b chains.

It is found in the cell membrane. It carries out the reaction ATP + H2O + 4 H(+)(in) = ADP + phosphate + 5 H(+)(out). In terms of biological role, produces ATP from ADP in the presence of a proton gradient across the membrane. The catalytic sites are hosted primarily by the beta subunits. In Protochlamydia amoebophila (strain UWE25), this protein is ATP synthase subunit beta.